The primary structure comprises 597 residues: Elongation factor 4 (597 aa).

The region spanning Ser4–Lys181 is the tr-type G domain. Residues Asp16–Thr21 and Asn128–Asp131 each bind GTP.

It belongs to the TRAFAC class translation factor GTPase superfamily. Classic translation factor GTPase family. LepA subfamily.

The protein resides in the cell membrane. The enzyme catalyses GTP + H2O = GDP + phosphate + H(+). Functionally, required for accurate and efficient protein synthesis under certain stress conditions. May act as a fidelity factor of the translation reaction, by catalyzing a one-codon backward translocation of tRNAs on improperly translocated ribosomes. Back-translocation proceeds from a post-translocation (POST) complex to a pre-translocation (PRE) complex, thus giving elongation factor G a second chance to translocate the tRNAs correctly. Binds to ribosomes in a GTP-dependent manner. The protein is Elongation factor 4 of Mycoplasmopsis agalactiae (strain NCTC 10123 / CIP 59.7 / PG2) (Mycoplasma agalactiae).